The chain runs to 334 residues: Transcription initiation factor IIB (334 aa).

Residues Thr34–Asp65 form a TFIIB-type zinc finger. Cys38, Cys41, Cys57, and Cys60 together coordinate Zn(2+). Repeat copies occupy residues Ser151–Leu234 and Asp245–Glu326.

It belongs to the TFIIB family.

In terms of biological role, stabilizes TBP binding to an archaeal box-A promoter. Also responsible for recruiting RNA polymerase II to the pre-initiation complex (DNA-TBP-TFIIB). This Methanosphaerula palustris (strain ATCC BAA-1556 / DSM 19958 / E1-9c) protein is Transcription initiation factor IIB.